A 153-amino-acid chain; its full sequence is Small ribosomal subunit protein bS6 (153 aa).

The segment at 94-153 (EAHEEGPSAMMQKRDRDDRPRRDGDRPDRGPREDRGPRPPREGGFGDREDRPRRPREDRA) is disordered.

This sequence belongs to the bacterial ribosomal protein bS6 family.

In terms of biological role, binds together with bS18 to 16S ribosomal RNA. This Agrobacterium fabrum (strain C58 / ATCC 33970) (Agrobacterium tumefaciens (strain C58)) protein is Small ribosomal subunit protein bS6.